The sequence spans 117 residues: NADH-ubiquinone oxidoreductase chain 3 (117 aa).

3 helical membrane-spanning segments follow: residues 3-23 (LLLT…IVSF), 56-76 (FFLV…LLPL), and 85-105 (PMFT…GLIY).

Belongs to the complex I subunit 3 family.

It localises to the mitochondrion membrane. The enzyme catalyses a ubiquinone + NADH + 5 H(+)(in) = a ubiquinol + NAD(+) + 4 H(+)(out). In terms of biological role, core subunit of the mitochondrial membrane respiratory chain NADH dehydrogenase (Complex I) that is believed to belong to the minimal assembly required for catalysis. Complex I functions in the transfer of electrons from NADH to the respiratory chain. The immediate electron acceptor for the enzyme is believed to be ubiquinone. The polypeptide is NADH-ubiquinone oxidoreductase chain 3 (MT-ND3) (Tetraodon nigroviridis (Spotted green pufferfish)).